Here is a 563-residue protein sequence, read N- to C-terminus: Inclusion body clearance protein IML2 (563 aa).

The protein belongs to the IML2 family. In terms of assembly, interacts with lipid droplet proteins.

It is found in the cytoplasm. Its subcellular location is the nucleus. Functionally, inclusion body (IB) resident protein that interacts strongly with lipid droplet (LD) proteins. Involved in LD-mediated IB clearing after protein folding stress, probably by enabling access to the IBs of an LD-stored soluble sterol derivative that acts as a chaperone in inclusion clearing. The chain is Inclusion body clearance protein IML2 from Schizosaccharomyces pombe (strain 972 / ATCC 24843) (Fission yeast).